The primary structure comprises 132 residues: Small ribosomal subunit protein uS8 (132 aa).

The protein belongs to the universal ribosomal protein uS8 family. In terms of assembly, part of the 30S ribosomal subunit. Contacts proteins S5 and S12.

Functionally, one of the primary rRNA binding proteins, it binds directly to 16S rRNA central domain where it helps coordinate assembly of the platform of the 30S subunit. The sequence is that of Small ribosomal subunit protein uS8 from Geobacillus sp. (strain WCH70).